The chain runs to 671 residues: Probable potassium transport system protein Kup 2 (671 aa).

12 helical membrane-spanning segments follow: residues glycine 18–methionine 38, valine 60–leucine 80, tryptophan 103–proline 123, alanine 146–alanine 166, phenylalanine 173–phenylalanine 193, alanine 218–serine 238, tryptophan 252–alanine 272, methionine 292–isoleucine 312, leucine 343–phenylalanine 363, tyrosine 373–isoleucine 393, isoleucine 402–valine 422, and phenylalanine 424–isoleucine 444.

It belongs to the HAK/KUP transporter (TC 2.A.72) family.

The protein resides in the cell membrane. The catalysed reaction is K(+)(in) + H(+)(in) = K(+)(out) + H(+)(out). In terms of biological role, transport of potassium into the cell. Likely operates as a K(+):H(+) symporter. This Lactococcus lactis subsp. lactis (strain IL1403) (Streptococcus lactis) protein is Probable potassium transport system protein Kup 2.